We begin with the raw amino-acid sequence, 148 residues long: Deoxyuridine 5'-triphosphate nucleotidohydrolase (148 aa).

Substrate is bound by residues 67–69, Asn80, 84–86, and Met94; these read RSG and LID.

The protein belongs to the dUTPase family. Requires Mg(2+) as cofactor.

The enzyme catalyses dUTP + H2O = dUMP + diphosphate + H(+). It functions in the pathway pyrimidine metabolism; dUMP biosynthesis; dUMP from dCTP (dUTP route): step 2/2. This enzyme is involved in nucleotide metabolism: it produces dUMP, the immediate precursor of thymidine nucleotides and it decreases the intracellular concentration of dUTP so that uracil cannot be incorporated into DNA. The polypeptide is Deoxyuridine 5'-triphosphate nucleotidohydrolase (Burkholderia multivorans (strain ATCC 17616 / 249)).